Here is a 328-residue protein sequence, read N- to C-terminus: Global transcription regulator sge1 (328 aa).

2 disordered regions span residues 94 to 120 (PGEK…PRQR) and 251 to 293 (QMHQ…QYVH). Composition is skewed to low complexity over residues 106–116 (KSTTQSGGISK), 251–261 (QMHQPQVHQPL), and 282–293 (AHQPQVHQQYVH).

It belongs to the MIT1/WOR1 family.

It localises to the nucleus. In terms of biological role, global transcriptional regulator of transcription that impacts, but is not absolutely required for secondary metabolism and pathogenicity on maize. Regulates synthesis of multiple secondary metabolites, including fumonisins and fusarins. The protein is Global transcription regulator sge1 of Gibberella moniliformis (strain M3125 / FGSC 7600) (Maize ear and stalk rot fungus).